The sequence spans 336 residues: tRNA N6-adenosine threonylcarbamoyltransferase (336 aa).

The Fe cation site is built by histidine 114 and histidine 118. Substrate-binding positions include 136–140, aspartate 169, glycine 182, aspartate 186, and asparagine 275; that span reads LVSGG. Aspartate 301 serves as a coordination point for Fe cation.

Belongs to the KAE1 / TsaD family. Fe(2+) is required as a cofactor.

It is found in the cytoplasm. The enzyme catalyses L-threonylcarbamoyladenylate + adenosine(37) in tRNA = N(6)-L-threonylcarbamoyladenosine(37) in tRNA + AMP + H(+). Its function is as follows. Required for the formation of a threonylcarbamoyl group on adenosine at position 37 (t(6)A37) in tRNAs that read codons beginning with adenine. Is involved in the transfer of the threonylcarbamoyl moiety of threonylcarbamoyl-AMP (TC-AMP) to the N6 group of A37, together with TsaE and TsaB. TsaD likely plays a direct catalytic role in this reaction. The sequence is that of tRNA N6-adenosine threonylcarbamoyltransferase from Streptococcus pneumoniae (strain JJA).